A 291-amino-acid chain; its full sequence is Small ribosomal subunit protein uS3 (291 aa).

In terms of domain architecture, KH type-2 spans 39 to 110; the sequence is IRLEIMKFLK…KISIKIKEVK (72 aa).

This sequence belongs to the universal ribosomal protein uS3 family. As to quaternary structure, part of the 30S ribosomal subunit. Forms a tight complex with proteins S10 and S14.

Binds the lower part of the 30S subunit head. Binds mRNA in the 70S ribosome, positioning it for translation. The protein is Small ribosomal subunit protein uS3 of Borreliella afzelii (strain PKo) (Borrelia afzelii).